Here is a 684-residue protein sequence, read N- to C-terminus: Methionine--tRNA ligase (684 aa).

A 'HIGH' region motif is present at residues 12-22 (PYANGSIHLGH). Residues cysteine 143, cysteine 146, cysteine 156, and cysteine 159 each contribute to the Zn(2+) site. Residues 339 to 343 (KMSKS) carry the 'KMSKS' region motif. Lysine 342 serves as a coordination point for ATP. In terms of domain architecture, tRNA-binding spans 581–684 (DFMKIDMRVA…AGAQPGDKVG (104 aa)).

This sequence belongs to the class-I aminoacyl-tRNA synthetase family. MetG type 1 subfamily. As to quaternary structure, homodimer. It depends on Zn(2+) as a cofactor.

It is found in the cytoplasm. The enzyme catalyses tRNA(Met) + L-methionine + ATP = L-methionyl-tRNA(Met) + AMP + diphosphate. Its function is as follows. Is required not only for elongation of protein synthesis but also for the initiation of all mRNA translation through initiator tRNA(fMet) aminoacylation. The chain is Methionine--tRNA ligase from Neisseria gonorrhoeae (strain ATCC 700825 / FA 1090).